Here is a 243-residue protein sequence, read N- to C-terminus: Myelin protein P0 (243 aa).

An N-terminal signal peptide occupies residues 1–26 (MESSGLRAPCSLLVLLSALVLPPTLA). The 115-residue stretch at 27 to 141 (IEVYTDREVY…VGKSSYVHLQ (115 aa)) folds into the Ig-like V-type domain. Residues 27 to 154 (IEVYTDREVY…KGAARAGLVL (128 aa)) are Extracellular-facing. Cysteines 47 and 123 form a disulfide. Asparagine 118 is a glycosylation site (N-linked (GlcNAc...) asparagine). A helical transmembrane segment spans residues 155–175 (GIIIAVALALVIVVTILILLI). The Cytoplasmic segment spans residues 176–243 (RYCWLRRQVR…GIGDSRKDRK (68 aa)). Positions 201-243 (AKDSSKRSSRQTPILYAMLDQTRGKASEKKGKGGIGDSRKDRK) are disordered. Residues 222 to 243 (TRGKASEKKGKGGIGDSRKDRK) are compositionally biased toward basic and acidic residues.

It belongs to the myelin P0 protein family.

The protein resides in the cell membrane. Functionally, creation of an extracellular membrane face which guides the wrapping process and ultimately compacts adjacent lamellae. This Xenopus tropicalis (Western clawed frog) protein is Myelin protein P0 (mpz).